Reading from the N-terminus, the 144-residue chain is Ribosome-binding factor A (144 aa).

Positions 121–144 (KAQTGVEEPLENTAEGEENPSGGE) are disordered. A compositionally biased stretch (acidic residues) spans 128–138 (EPLENTAEGEE).

Belongs to the RbfA family. Monomer. Binds 30S ribosomal subunits, but not 50S ribosomal subunits or 70S ribosomes.

It is found in the cytoplasm. In terms of biological role, one of several proteins that assist in the late maturation steps of the functional core of the 30S ribosomal subunit. Associates with free 30S ribosomal subunits (but not with 30S subunits that are part of 70S ribosomes or polysomes). Required for efficient processing of 16S rRNA. May interact with the 5'-terminal helix region of 16S rRNA. In Synechococcus sp. (strain JA-2-3B'a(2-13)) (Cyanobacteria bacterium Yellowstone B-Prime), this protein is Ribosome-binding factor A.